Consider the following 310-residue polypeptide: Porphobilinogen deaminase (310 aa).

Position 243 is an S-(dipyrrolylmethanemethyl)cysteine (cysteine 243).

This sequence belongs to the HMBS family. As to quaternary structure, monomer. It depends on dipyrromethane as a cofactor.

The enzyme catalyses 4 porphobilinogen + H2O = hydroxymethylbilane + 4 NH4(+). It participates in porphyrin-containing compound metabolism; protoporphyrin-IX biosynthesis; coproporphyrinogen-III from 5-aminolevulinate: step 2/4. Its function is as follows. Tetrapolymerization of the monopyrrole PBG into the hydroxymethylbilane pre-uroporphyrinogen in several discrete steps. This is Porphobilinogen deaminase from Methylobacillus flagellatus (strain ATCC 51484 / DSM 6875 / VKM B-1610 / KT).